Here is a 156-residue protein sequence, read N- to C-terminus: Small ribosomal subunit protein uS7 (156 aa).

It belongs to the universal ribosomal protein uS7 family. In terms of assembly, part of the 30S ribosomal subunit. Contacts proteins S9 and S11.

One of the primary rRNA binding proteins, it binds directly to 16S rRNA where it nucleates assembly of the head domain of the 30S subunit. Is located at the subunit interface close to the decoding center, probably blocks exit of the E-site tRNA. In Bacillus cereus (strain G9842), this protein is Small ribosomal subunit protein uS7.